The following is a 106-amino-acid chain: Large ribosomal subunit protein bL21 (106 aa).

The protein belongs to the bacterial ribosomal protein bL21 family. As to quaternary structure, part of the 50S ribosomal subunit. Contacts protein L20.

Functionally, this protein binds to 23S rRNA in the presence of protein L20. This is Large ribosomal subunit protein bL21 from Xanthomonas euvesicatoria pv. vesicatoria (strain 85-10) (Xanthomonas campestris pv. vesicatoria).